Consider the following 139-residue polypeptide: Putative nickel-responsive regulator (139 aa).

Histidine 79, histidine 90, histidine 92, and cysteine 98 together coordinate Ni(2+).

The protein belongs to the transcriptional regulatory CopG/NikR family. The cofactor is Ni(2+).

Functionally, transcriptional regulator. The sequence is that of Putative nickel-responsive regulator from Trichlorobacter lovleyi (strain ATCC BAA-1151 / DSM 17278 / SZ) (Geobacter lovleyi).